We begin with the raw amino-acid sequence, 641 residues long: MEVAGAQAGILPLLLRHPASLRGSLSLSCGGARRSWAAAAATAEGGGGEEGRGYERVPMDTPGAYRLVDRATGRSVIVWGGTDDVSMPSPAVLSTTTRVPDRPKENGRSTSIGNFGRLKAQKVKVLARRSAHLKREDSGRISTSRFSESPSDESDEDGTYFERDRARNTRQNSRSRDDKTRGAHSLNSVLRQYRGADDLDFPGSEATSGSKRWGNISDVTFGRQNQRQKGPLDSGFFSRRSFKEIGCSDEILGALRSFGFPRPSHIQAMAYRPVLEGKSCIIGDQSGSGKTLAYLCPVVQNLRKEEVEGLHRSSPRNPRVVVLTPTAELASQVLNNCRSISKSGVPFRSMVATGGFRQKTQLESLDQELDVLIATPGRFLYLLQEGFVQLNNLRCVVLDEVDILYGEESFEQVLHQLITVAPLTTQYLFVTATLPLDIYNKVVETFPDCELIMGPGVHRTSSRLEEILVDCSGDDNEEKNPETAFSNKKSALVKIIEESPVRKTIIFCNKIETCRKVENALRRVDRKASQIKVLPFHAALDQQQRIANIKEFLNKQTADSMFLVCTDRASRGIDFANVNHVVLFDYPRDPSEYVRRVGRTARGASGNGKAFVFAVGKQVSLARRVMERNIKGHPLHDVPCV.

Disordered regions lie at residues 86–115, 129–189, and 197–216; these read SMPSPAVLSTTTRVPDRPKENGRSTSIGNF, RSAH…LNSV, and DDLDFPGSEATSGSKRWGNI. Over residues 150–159 the composition is skewed to acidic residues; it reads PSDESDEDGT. The short motif at 240 to 268 is the Q motif element; it reads RSFKEIGCSDEILGALRSFGFPRPSHIQA. Residues 271–452 form the Helicase ATP-binding domain; sequence YRPVLEGKSC…VETFPDCELI (182 aa). 284-291 is a binding site for ATP; sequence DQSGSGKT. Residues 399 to 402 carry the DEAD box motif; that stretch reads DEVD. One can recognise a Helicase C-terminal domain in the interval 487–641; the sequence is NKKSALVKII…GHPLHDVPCV (155 aa).

The protein belongs to the DEAD box helicase family.

The enzyme catalyses ATP + H2O = ADP + phosphate + H(+). Its function is as follows. Probably involved in resistance to biotic and abiotic stresses. Confers tolerance to oxidative stress and mediates pathogenesis-related (PR) genes expression. Exhibits RNA-dependent ATPase and ATP-dependent RNA helicase activities in vitro. The protein is DEAD-box ATP-dependent RNA helicase 50 of Oryza sativa subsp. japonica (Rice).